The primary structure comprises 259 residues: Putative aldolase class 2 protein PA3430 (259 aa).

H113, H115, and H176 together coordinate Zn(2+).

This sequence belongs to the aldolase class II family. It depends on Zn(2+) as a cofactor.

In Pseudomonas aeruginosa (strain ATCC 15692 / DSM 22644 / CIP 104116 / JCM 14847 / LMG 12228 / 1C / PRS 101 / PAO1), this protein is Putative aldolase class 2 protein PA3430.